Reading from the N-terminus, the 77-residue chain is Sec-independent protein translocase protein TatA (77 aa).

Residues 1-21 (MGSLSIWHWILVIAVVLLLFG) traverse the membrane as a helical segment. A compositionally biased stretch (basic and acidic residues) spans 42–60 (GMQDDDKPADKPEPAKSIE). Residues 42–77 (GMQDDDKPADKPEPAKSIEHNAAPTAARSDVGSKAV) are disordered.

The protein belongs to the TatA/E family. The Tat system comprises two distinct complexes: a TatABC complex, containing multiple copies of TatA, TatB and TatC subunits, and a separate TatA complex, containing only TatA subunits. Substrates initially bind to the TatABC complex, which probably triggers association of the separate TatA complex to form the active translocon.

It localises to the cell inner membrane. Functionally, part of the twin-arginine translocation (Tat) system that transports large folded proteins containing a characteristic twin-arginine motif in their signal peptide across membranes. TatA could form the protein-conducting channel of the Tat system. In Bradyrhizobium diazoefficiens (strain JCM 10833 / BCRC 13528 / IAM 13628 / NBRC 14792 / USDA 110), this protein is Sec-independent protein translocase protein TatA.